The primary structure comprises 309 residues: Succinate dehydrogenase [ubiquinone] iron-sulfur subunit 3, mitochondrial (309 aa).

The N-terminal 22 residues, 1 to 22 (MSSVLRLLGRRICNPAAEKVRL), are a transit peptide targeting the mitochondrion. Residues 69–160 (FKIYRWNPDK…PTIITPLPHM (92 aa)) form the 2Fe-2S ferredoxin-type domain. Positions 120, 125, and 140 each coordinate [2Fe-2S] cluster. Residues 202-232 (DRKKLDGLYECILCACCTTSCPSYWWNPEEF) form the 4Fe-4S ferredoxin-type domain. Residues Cys-212, Cys-215, and Cys-218 each coordinate [4Fe-4S] cluster. [3Fe-4S] cluster is bound at residue Cys-222. Trp-227 contacts a ubiquinone. The [3Fe-4S] cluster site is built by Cys-270 and Cys-276. Cys-280 contributes to the [4Fe-4S] cluster binding site.

Belongs to the succinate dehydrogenase/fumarate reductase iron-sulfur protein family. In terms of assembly, component of complex II composed of eight subunits in plants: four classical SDH subunits SDH1, SDH2, SDH3 and SDH4 (a flavoprotein (FP), an iron-sulfur protein (IP), and a cytochrome b composed of a large and a small subunit.), as well as four subunits unknown in mitochondria from bacteria and heterotrophic eukaryotes. [2Fe-2S] cluster is required as a cofactor. The cofactor is [3Fe-4S] cluster. [4Fe-4S] cluster serves as cofactor.

The protein resides in the mitochondrion inner membrane. It catalyses the reaction a quinone + succinate = fumarate + a quinol. It functions in the pathway carbohydrate metabolism; tricarboxylic acid cycle; fumarate from succinate (eukaryal route): step 1/1. In terms of biological role, iron-sulfur protein (IP) subunit of succinate dehydrogenase (SDH) that is involved in complex II of the mitochondrial electron transport chain and is responsible for transferring electrons from succinate to ubiquinone (coenzyme Q). The polypeptide is Succinate dehydrogenase [ubiquinone] iron-sulfur subunit 3, mitochondrial (SDH2-3) (Arabidopsis thaliana (Mouse-ear cress)).